The sequence spans 206 residues: RILP-like protein 2 (206 aa).

The segment at 1 to 29 is disordered; that stretch reads MEEPPLREEEEEEEEDEAGPEGALGKSPL. A compositionally biased stretch (acidic residues) spans 8-19; the sequence is EEEEEEEEDEAG. The 90-residue stretch at 19–108 folds into the RH1 domain; sequence GPEGALGKSP…RREGSAAGPE (90 aa). Residues 67 to 159 are a coiled coil; it reads LEMLETLVNE…VQEELQCYKS (93 aa). Positions 125-197 constitute an RH2 domain; sequence RPRFTLQELR…KEEKTIIRKL (73 aa). Residues 161 to 189 are disordered; that stretch reads LIPPREGPGGRREKEALFPRGSNANSNKE. Over residues 168 to 177 the composition is skewed to basic and acidic residues; the sequence is PGGRREKEAL.

Belongs to the RILPL family. Homodimer. Interacts with RAC1. Interacts (via N-terminus) with MYO5A, the interaction is required for its role in dendrite formation. Interacts with RAB8A; interaction is dependent on the phosphorylation of RAB8A on 'Thr-72'. Interacts with RAB10 and RAB12; interaction is dependent on the phosphorylation of 'Thr-73' on RAB10 and 'Ser-105' on RAB12.

Its subcellular location is the cytoplasm. It localises to the cytosol. The protein localises to the cytoskeleton. The protein resides in the microtubule organizing center. It is found in the centrosome. Its subcellular location is the cell projection. It localises to the cilium. Functionally, involved in cell shape and neuronal morphogenesis, positively regulating the establishment and maintenance of dendritic spines. Plays a role in cellular protein transport, including protein transport away from primary cilia. May function via activation of RAC1 and PAK1. In Bos taurus (Bovine), this protein is RILP-like protein 2 (RILPL2).